A 242-amino-acid polypeptide reads, in one-letter code: Probable transcriptional regulatory protein Bcen2424_2294 (242 aa).

It belongs to the TACO1 family.

The protein resides in the cytoplasm. This chain is Probable transcriptional regulatory protein Bcen2424_2294, found in Burkholderia cenocepacia (strain HI2424).